Reading from the N-terminus, the 303-residue chain is Probable cell division protein WhiA (303 aa).

Positions 272–303 (SIQQLADSLSTPLTKSGVNHRLRKINKIADEL) form a DNA-binding region, H-T-H motif.

Belongs to the WhiA family.

In terms of biological role, involved in cell division and chromosome segregation. The chain is Probable cell division protein WhiA from Streptococcus pneumoniae (strain Hungary19A-6).